Consider the following 158-residue polypeptide: Transcription elongation factor GreA (158 aa).

Residues 45–73 adopt a coiled-coil conformation; sequence AEYHAAREQQSFIEGRIKQLESELSHAEI.

Belongs to the GreA/GreB family.

Functionally, necessary for efficient RNA polymerase transcription elongation past template-encoded arresting sites. The arresting sites in DNA have the property of trapping a certain fraction of elongating RNA polymerases that pass through, resulting in locked ternary complexes. Cleavage of the nascent transcript by cleavage factors such as GreA or GreB allows the resumption of elongation from the new 3'terminus. GreA releases sequences of 2 to 3 nucleotides. The chain is Transcription elongation factor GreA from Xanthomonas axonopodis pv. citri (strain 306).